A 439-amino-acid chain; its full sequence is Paraneoplastic antigen-like protein 8A (439 aa).

The tract at residues 213–439 (ETPNNWNATE…RRATNESRKV (227 aa)) is disordered. A compositionally biased stretch (basic residues) spans 231–249 (LVRRAGAKSRSRRKKQKKN). Positions 403 to 419 (KAPQGQQPAEATASTSR) are enriched in polar residues. Positions 423–439 (AKPEGSPRRATNESRKV) are enriched in basic and acidic residues.

Belongs to the PNMA family.

The sequence is that of Paraneoplastic antigen-like protein 8A (PNMA8A) from Pongo abelii (Sumatran orangutan).